The primary structure comprises 212 residues: Small ribosomal subunit protein eS6 (212 aa).

It belongs to the eukaryotic ribosomal protein eS6 family.

The polypeptide is Small ribosomal subunit protein eS6 (Metallosphaera sedula (strain ATCC 51363 / DSM 5348 / JCM 9185 / NBRC 15509 / TH2)).